Consider the following 563-residue polypeptide: Kelch repeat and BTB domain-containing protein 1 (563 aa).

Residues 21–88 (CDINIVINDE…IYGIPLSLTN (68 aa)) form the BTB domain. One can recognise a BACK domain in the interval 123 to 219 (CIDFYIYADK…SLLSPQVIKS (97 aa)). Kelch repeat units follow at residues 252 to 297 (IELI…VLDN), 298 to 346 (IIYM…ADDE), 347 to 395 (YIYC…MLNG), 397 to 441 (IYVI…VHAG), 442 to 492 (KIYI…SAHN), and 494 to 538 (LYVG…CEPI).

In terms of assembly, interacts (via BTB domain) with host CUL3.

The protein localises to the host cytoplasm. Functionally, probable substrate-specific adapter of CUL3-containing E3 ubiquitin-protein ligases which mediate the ubiquitination and subsequent proteasomal degradation of host target proteins. The sequence is that of Kelch repeat and BTB domain-containing protein 1 (KBTB1) from Cowpox virus (strain Brighton Red) (CPV).